A 105-amino-acid chain; its full sequence is Small ribosomal subunit protein uS10 (105 aa).

The protein belongs to the universal ribosomal protein uS10 family. Part of the 30S ribosomal subunit.

Functionally, involved in the binding of tRNA to the ribosomes. The sequence is that of Small ribosomal subunit protein uS10 from Acidobacterium capsulatum (strain ATCC 51196 / DSM 11244 / BCRC 80197 / JCM 7670 / NBRC 15755 / NCIMB 13165 / 161).